The sequence spans 363 residues: 3-dehydroquinate synthase (363 aa).

NAD(+)-binding positions include 75–80, 109–113, 133–134, K146, K155, and 173–176; these read DAEEGK, GAVTD, TS, and TLDT. Zn(2+)-binding residues include E188, H251, and H267.

Belongs to the sugar phosphate cyclases superfamily. Dehydroquinate synthase family. Co(2+) serves as cofactor. Requires Zn(2+) as cofactor. The cofactor is NAD(+).

It localises to the cytoplasm. The enzyme catalyses 7-phospho-2-dehydro-3-deoxy-D-arabino-heptonate = 3-dehydroquinate + phosphate. Its pathway is metabolic intermediate biosynthesis; chorismate biosynthesis; chorismate from D-erythrose 4-phosphate and phosphoenolpyruvate: step 2/7. Catalyzes the conversion of 3-deoxy-D-arabino-heptulosonate 7-phosphate (DAHP) to dehydroquinate (DHQ). The sequence is that of 3-dehydroquinate synthase from Pseudarthrobacter chlorophenolicus (strain ATCC 700700 / DSM 12829 / CIP 107037 / JCM 12360 / KCTC 9906 / NCIMB 13794 / A6) (Arthrobacter chlorophenolicus).